The following is a 264-amino-acid chain: Thymidylate synthase (264 aa).

R21 provides a ligand contact to dUMP. H51 provides a ligand contact to (6R)-5,10-methylene-5,6,7,8-tetrahydrofolate. 126 to 127 contributes to the dUMP binding site; that stretch reads RR. The active-site Nucleophile is the C146. Residues 166-169, N177, and 207-209 contribute to the dUMP site; these read RSAD and HLY. D169 lines the (6R)-5,10-methylene-5,6,7,8-tetrahydrofolate pocket. A263 contributes to the (6R)-5,10-methylene-5,6,7,8-tetrahydrofolate binding site.

It belongs to the thymidylate synthase family. Bacterial-type ThyA subfamily. Homodimer.

Its subcellular location is the cytoplasm. The enzyme catalyses dUMP + (6R)-5,10-methylene-5,6,7,8-tetrahydrofolate = 7,8-dihydrofolate + dTMP. Its pathway is pyrimidine metabolism; dTTP biosynthesis. In terms of biological role, catalyzes the reductive methylation of 2'-deoxyuridine-5'-monophosphate (dUMP) to 2'-deoxythymidine-5'-monophosphate (dTMP) while utilizing 5,10-methylenetetrahydrofolate (mTHF) as the methyl donor and reductant in the reaction, yielding dihydrofolate (DHF) as a by-product. This enzymatic reaction provides an intracellular de novo source of dTMP, an essential precursor for DNA biosynthesis. The protein is Thymidylate synthase of Aromatoleum aromaticum (strain DSM 19018 / LMG 30748 / EbN1) (Azoarcus sp. (strain EbN1)).